The sequence spans 132 residues: Chemokine-like protein TAFA-5 (132 aa).

The N-terminal stretch at 1 to 43 is a signal peptide; it reads MAPSPRTGSRQDATALPSMSSTFWAFMILASLLIAYCSQLAAG. N-linked (GlcNAc...) asparagine glycosylation occurs at asparagine 113.

It belongs to the TAFA family. Expressed in the subcutaneous and perirenal adipose tissue (at protein level). Highly expressed in adipose tissue with moderate expression in the brain and ovary. Isoform 2: Brain-specific.

It is found in the secreted. In terms of biological role, acts as a chemokine-like protein by regulating cell proliferation and migration through activation of G protein-coupled receptors (GPCRs), such as S1PR2 and FPR2. Stimulates chemotactic migration of macrophages mediated by the MAPK3/ERK1 and AKT1 pathway. Blocks TNFSF11/RANKL-induced osteoclast formation from macrophages by inhibiting up-regulation of osteoclast fusogenic and differentiation genes. Stimulation of macrophage migration and inhibition of osteoclast formation is mediated via GPCR FPR2. Acts as an adipokine by negatively regulating vascular smooth muscle cell (VSMC) proliferation and migration in response to platelet-derived growth factor stimulation via GPCR S1PR2 and G protein GNA12/GNA13-transmitted RHOA signaling. Inhibits injury-induced cell proliferation and neointima formation in the femoral arteries. The polypeptide is Chemokine-like protein TAFA-5 (Homo sapiens (Human)).